Reading from the N-terminus, the 188-residue chain is dCTP deaminase (188 aa).

Residues 111 to 116, 135 to 137, Gln156, Tyr170, and Gln180 each bind dCTP; these read KSTYAR and VLE. The active-site Proton donor/acceptor is Glu137.

The protein belongs to the dCTP deaminase family. In terms of assembly, homotrimer.

The enzyme catalyses dCTP + H2O + H(+) = dUTP + NH4(+). The protein operates within pyrimidine metabolism; dUMP biosynthesis; dUMP from dCTP (dUTP route): step 1/2. In terms of biological role, catalyzes the deamination of dCTP to dUTP. The protein is dCTP deaminase of Protochlamydia amoebophila (strain UWE25).